The primary structure comprises 319 residues: ATP-dependent 6-phosphofructokinase (319 aa).

An ATP-binding site is contributed by G11. 21 to 25 (RAVAR) contributes to the ADP binding site. Residues 72–73 (RY) and 102–105 (GDGS) each bind ATP. D103 is a Mg(2+) binding site. Position 125 to 127 (125 to 127 (TID)) interacts with substrate. D127 (proton acceptor) is an active-site residue. R154 serves as a coordination point for ADP. Substrate is bound by residues R162 and 169–171 (MGR). ADP-binding positions include 185–187 (GAE) and R211. Substrate contacts are provided by residues E222, R243, and 249–252 (HIVR).

This sequence belongs to the phosphofructokinase type A (PFKA) family. ATP-dependent PFK group I subfamily. Prokaryotic clade 'B1' sub-subfamily. Homotetramer. Requires Mg(2+) as cofactor.

It localises to the cytoplasm. It carries out the reaction beta-D-fructose 6-phosphate + ATP = beta-D-fructose 1,6-bisphosphate + ADP + H(+). It functions in the pathway carbohydrate degradation; glycolysis; D-glyceraldehyde 3-phosphate and glycerone phosphate from D-glucose: step 3/4. Allosterically activated by ADP and other diphosphonucleosides, and allosterically inhibited by phosphoenolpyruvate. Its function is as follows. Catalyzes the phosphorylation of D-fructose 6-phosphate to fructose 1,6-bisphosphate by ATP, the first committing step of glycolysis. The sequence is that of ATP-dependent 6-phosphofructokinase from Lacticaseibacillus casei (strain BL23) (Lactobacillus casei).